We begin with the raw amino-acid sequence, 543 residues long: Small conductance calcium-activated potassium channel protein 1 (543 aa).

Residues Met-1–Arg-92 form a disordered region. The segment covering Asp-65 to Glu-76 has biased composition (acidic residues). Residues Leu-111–Val-131 traverse the membrane as a helical segment. Residues Phe-140–Tyr-160 traverse the membrane as a helical segment. A helical membrane pass occupies residues Ile-179–His-199. The helical transmembrane segment at Val-228–His-248 threads the bilayer. Residues Leu-277 to Ala-297 traverse the membrane as a helical segment. An intramembrane region (pore-forming) is located at residues Phe-317–Val-337. The helical transmembrane segment at Val-346–Ala-366 threads the bilayer. The segment at Asp-384 to Val-463 is calmodulin-binding. Residues Gln-505–Gly-543 form a disordered region. The segment covering Arg-508–Gly-521 has biased composition (pro residues).

It belongs to the potassium channel KCNN family. KCa2.1/KCNN1 subfamily. As to quaternary structure, homodimer. Heteromultimer with KCNN2 and KCNN3. The complex is composed of 4 channel subunits each of which binds to a calmodulin subunit which regulates the channel activity through calcium-binding. Interacts with calmodulin.

It localises to the membrane. Its subcellular location is the cytoplasm. It is found in the myofibril. The protein localises to the sarcomere. The protein resides in the z line. The catalysed reaction is K(+)(in) = K(+)(out). Its activity is regulated as follows. Inhibited by bee venom neurotoxin apamin. Inhibited by d-tubocurarine and tetraethylammonium (TEA). Small conductance calcium-activated potassium channel that mediates the voltage-independent transmembrane transfer of potassium across the cell membrane through a constitutive interaction with calmodulin which binds the intracellular calcium allowing its opening. The current is characterized by a voltage-independent activation, an intracellular calcium concentration increase-dependent activation and a single-channel conductance of about 3 picosiemens. Also presents an inwardly rectifying current, thus reducing its already small outward conductance of potassium ions, which is particularly the case when the membrane potential displays positive values, above + 20 mV. Activation is followed by membrane hyperpolarization. Thought to regulate neuronal excitability by contributing to the slow component of synaptic afterhyperpolarization. The protein is Small conductance calcium-activated potassium channel protein 1 of Homo sapiens (Human).